The primary structure comprises 1163 residues: MFSRKKRELMKTPSISKKNRAGSPSPQPSGPHFISGETEAVSRPENPFNELPSDLPKELPRKDGADAVFPGTSLELPAGSSGVKATGTLKRPTSLSRHASAAGFPLSGAASWTLGRSHRSPLTAASPGELPTEGTGPDVVEDISHLLADVARFAEGLEKLKECVLRDDLLEARRPLAHECLGEALRVMRQIISKYPLLNTVETLTAAGTLIAKVKAFHYESNNDLEKQEFEKALETIAVAFSSAVSEFLMGEVDSSTLLAVPPGDSSQSMESLYGSGSEGTPPSLDDCDAGCLPAEEVDVLLQRCEGGVDAALLYAKNMAKYMKDLISYLEKRTTLEMEFAKGLQKMAHNCRQSVTQEPHMPLLSIYSLALEQDLEFGHGMVQAVGTLQTQTFMQPLTLRRLEHEKRRKEIKEAWHRAQRKLQEAESNLRKAKQGYTQRCEDHDKARFLVAKAEEEQAGTAPGAGSTATKTLDKRRRLEEEAKNKAEEAMATYRTCVADAKTQKQELEDTKVTALRQIQEVIRQSDQTIKSATISYYQMMHMQTAPLPVHFQMLCESSKLYDPGQQYASHVRQLQRDQEPDVHYDFEPHVSANAWSPVMRARKSSFNVSDVAGPEAAGSPPEEGGCIEGTPVKGHRAGRGHQVHKSWPLSISDSASGLDPGPGAGDFKKFERTSSSGTMSSTEELVDPEGGAGASAFEQADLNGMTPELPVAVPSGPFRHEGLSKAARTHRLRKLRTPAKCRECNSYVYFQGAECEECCLACHKKCLETLAIQCGHKKLQGRLQLFGQDFSHAARSAPDGVPFIVKKCVCEIERRALRTKGIYRVNGVKTRVEKLCQAFENGKELVELSQASPHDISNVLKLYLRQLPEPLISFRLYHELVGLAKDSLKAEAEAKAASRGRQDSSESEAVAVAMAGRLRELLRDLPPENRASLQYLLRHLRRIVEVEQDNKMTPGNLGIVFGPTLLRPRPTEATVSLSSLVDYPHQARVIETLIVHYGLVFEEEPEEIPGGQDESSNQRAEVVVQVPYLEAGEGVVYPLQEAAEDGCRESRVVSNDSDSDLEEASELLSSSEASALCRLSFLEQQQSEASLEEASGSHSGSEEQLETTAREDGDGDEDSPAQRLSGFNTNQSNNVLQTPLPPMRLRGGRITLGSCRERQPEFV.

The disordered stretch occupies residues 1 to 99 (MFSRKKRELM…KRPTSLSRHA (99 aa)). Ser-23 and Ser-25 each carry phosphoserine. Positions 55 to 65 (LPKELPRKDGA) are enriched in basic and acidic residues. 3 positions are modified to phosphoserine: Ser-100, Ser-120, and Ser-126. Disordered regions lie at residues 118–137 (HRSP…GTGP), 262–282 (PPGD…EGTP), and 454–475 (EEEQ…LDKR). In terms of domain architecture, F-BAR spans 296 to 566 (EEVDVLLQRC…SSKLYDPGQQ (271 aa)). Residues 403–526 (EHEKRRKEIK…QIQEVIRQSD (124 aa)) adopt a coiled-coil conformation. Low complexity predominate over residues 458 to 470 (AGTAPGAGSTATK). Phosphoserine occurs at positions 596, 605, and 619. The disordered stretch occupies residues 610-695 (DVAGPEAAGS…VDPEGGAGAS (86 aa)). The segment covering 633–644 (KGHRAGRGHQVH) has biased composition (basic residues). Residue Ser-646 is modified to Phosphoserine. Positions 673-682 (TSSSGTMSST) are enriched in low complexity. The segment at 729 to 774 (THRLRKLRTPAKCRECNSYVYFQGAECEECCLACHKKCLETLAIQC) adopts a Phorbol-ester/DAG-type zinc-finger fold. The Rho-GAP domain maps to 788–1001 (QDFSHAARSA…TLIVHYGLVF (214 aa)). Residues Ser-976, Ser-1054, Ser-1057, and Ser-1059 each carry the phosphoserine modification. Disordered regions lie at residues 1042–1067 (AAED…ASEL) and 1087–1163 (SEAS…PEFV). The span at 1087 to 1099 (SEASLEEASGSHS) shows a compositional bias: low complexity. Polar residues predominate over residues 1125 to 1137 (SGFNTNQSNNVLQ).

Its subcellular location is the cytoplasm. The protein localises to the cell projection. It localises to the ruffle membrane. In terms of biological role, contains a GTPase activator for the Rho-type GTPases (RhoGAP) domain that would be able to negatively regulate the actin cytoskeleton as well as cell spreading. However, also contains N-terminally a BAR-domin which is able to play an autoinhibitory effect on this RhoGAP activity. The chain is Rho GTPase-activating protein 45 from Pongo abelii (Sumatran orangutan).